We begin with the raw amino-acid sequence, 63 residues long: Large ribosomal subunit protein bL28 (63 aa).

Belongs to the bacterial ribosomal protein bL28 family.

The protein is Large ribosomal subunit protein bL28 of Petrotoga mobilis (strain DSM 10674 / SJ95).